The chain runs to 40 residues: Acyl-CoA-binding protein 2 (40 aa).

Over residues 1–15 (ALKEEFEEHAEKAKT) the composition is skewed to basic and acidic residues. Residues 1–25 (ALKEEFEEHAEKAKTLPENTSSENK) are disordered. The region spanning 2–40 (LKEEFEEHAEKAKTLPENTSSENKLTLYGLYKQATVGNV) is the ACB domain.

Belongs to the ACBP family.

Its subcellular location is the cytoplasm. Functionally, binds medium- and long-chain acyl-CoA esters with very high affinity and may function as an intracellular carrier of acyl-CoA esters. The chain is Acyl-CoA-binding protein 2 from Digitalis lanata (Grecian foxglove).